A 115-amino-acid chain; its full sequence is Large ribosomal subunit protein bL20 (115 aa).

Belongs to the bacterial ribosomal protein bL20 family.

Functionally, binds directly to 23S ribosomal RNA and is necessary for the in vitro assembly process of the 50S ribosomal subunit. It is not involved in the protein synthesizing functions of that subunit. The sequence is that of Large ribosomal subunit protein bL20 (rplT) from Borreliella burgdorferi (strain ATCC 35210 / DSM 4680 / CIP 102532 / B31) (Borrelia burgdorferi).